The sequence spans 271 residues: Undecaprenyl-diphosphatase (271 aa).

8 helical membrane passes run 5 to 25 (YALFVAFVLGIVEGLTEFLPV), 45 to 65 (AATFEVVIQMGSILAVVAVFW), 86 to 106 (TLSLVHIILGMLPAVIIGLGI), 114 to 134 (LFGPETVMYALVAGGILLIIA), 149 to 169 (ISYKQAFGIGLFQCLALWPGF), 189 to 209 (AAEFSFILAVPMMVAASGLDL), 226 to 246 (VGFITAFVVAMIAIKTFLALI), and 251 to 271 (FIPFAIYRFIVAFAVYLVFVA).

The protein belongs to the UppP family.

The protein resides in the cell inner membrane. It catalyses the reaction di-trans,octa-cis-undecaprenyl diphosphate + H2O = di-trans,octa-cis-undecaprenyl phosphate + phosphate + H(+). Functionally, catalyzes the dephosphorylation of undecaprenyl diphosphate (UPP). Confers resistance to bacitracin. The protein is Undecaprenyl-diphosphatase of Aeromonas salmonicida (strain A449).